Consider the following 132-residue polypeptide: MLPRDRRVRTPAEFRHLGRTGTRAGRRTVVVSVATDPDQTRSTSPSAPRPRAGFVVSKAVGNAVTRNRVKRRLRAVVAEQMRLPPLRDLPVLVQVRALPAAAEADYALLRRETVGALGKALKPHLPAASEHA.

This sequence belongs to the RnpA family. In terms of assembly, consists of a catalytic RNA component (M1 or rnpB) and a protein subunit.

It carries out the reaction Endonucleolytic cleavage of RNA, removing 5'-extranucleotides from tRNA precursor.. In terms of biological role, RNaseP catalyzes the removal of the 5'-leader sequence from pre-tRNA to produce the mature 5'-terminus. It can also cleave other RNA substrates such as 4.5S RNA. The protein component plays an auxiliary but essential role in vivo by binding to the 5'-leader sequence and broadening the substrate specificity of the ribozyme. The polypeptide is Ribonuclease P protein component (Micrococcus luteus (strain ATCC 4698 / DSM 20030 / JCM 1464 / CCM 169 / CCUG 5858 / IAM 1056 / NBRC 3333 / NCIMB 9278 / NCTC 2665 / VKM Ac-2230) (Micrococcus lysodeikticus)).